The primary structure comprises 304 residues: Killer cell immunoglobulin-like receptor 2DS5 (304 aa).

Residues 1–21 (MSLMVISMACVAFFLLQGAWP) form the signal peptide. The Extracellular portion of the chain corresponds to 22–245 (HEGFRRKPSL…SETGNPRHLH (224 aa)). 2 Ig-like C2-type domains span residues 42–107 (EETV…VTHS) and 142–205 (GESV…FRDS). Disulfide bonds link cysteine 49-cysteine 100 and cysteine 149-cysteine 198. Residues asparagine 67, asparagine 84, asparagine 178, and asparagine 223 are each glycosylated (N-linked (GlcNAc...) asparagine). Residues 246 to 264 (VLIGTSVVKLPFTILLFFL) form a helical membrane-spanning segment. Residues 265-304 (LHRWCSNKKNASVMDQGPAGNRTVNREDSDEQDHQEVSYA) are Cytoplasmic-facing. The tract at residues 275–304 (ASVMDQGPAGNRTVNREDSDEQDHQEVSYA) is disordered. Residues 288–304 (VNREDSDEQDHQEVSYA) show a composition bias toward basic and acidic residues.

The protein belongs to the immunoglobulin superfamily. In terms of assembly, interacts with TYROBP. Post-translationally, N-glycosylated, glycosylation varies depending on the allele which alters cell surface expression levels. Expressed on a discrete subset of peripheral blood NK cells.

It is found in the cell membrane. Its function is as follows. Activating natural killer (NK) receptor that recognizes C2 epitopes of HLA-C alleles. Bridging the innate and adaptive immune systems, NK cells express a number of cell surface receptors which either inhibit or stimulate their cytotoxicity. Able to activate NK cells citotoxicity and cytokine production such as IFNG. Receptor functions are attenuated even lost in some alleles, such as KIR2DS5*002 represented in this entry. The chain is Killer cell immunoglobulin-like receptor 2DS5 from Homo sapiens (Human).